The primary structure comprises 606 residues: Calmegin (606 aa).

A signal peptide spans 1-19 (MRFQGFWLCLGLLFISVNA). The Lumenal portion of the chain corresponds to 20–466 (EFMDDSVEME…QLMSATEQRP (447 aa)). At K124 the chain carries N6-acetyllysine. C147 and C181 form a disulfide bridge. The segment at 255-308 (PPINPPKEIEDPTDEKPDDWDERAKIPDASAVKPEDWDESEPPQIVDSSAVKPD) is disordered. 8 repeat units span residues 263-276 (IEDP…DWDE), 280-293 (IPDA…DWDE), 299-312 (IVDS…GWLD), 318-331 (IPDP…DWNE), 335-348 (GEWE…PACR), 352-365 (GEWS…PKYK), 366-379 (GIWR…PNYQ), and 380-393 (GIWS…PDYF). The segment covering 265-275 (DPTDEKPDDWD) has biased composition (acidic residues). The segment at 313–346 (NEPEFIPDPNAEKPFDWNEDMDGEWEAPHISNPA) is interaction with PPIB. C347 and C351 are joined by a disulfide. A helical membrane pass occupies residues 467-487 (WLWFIYLLTAALPIALIGSFC). The Cytoplasmic segment spans residues 488 to 606 (WPRKVKKKYE…SVRKRRVRKE (119 aa)). Over residues 518–544 (EVKEEKAALEKPVDLEEEKKQSDGEIV) the composition is skewed to basic and acidic residues. Positions 518-606 (EVKEEKAALE…SVRKRRVRKE (89 aa)) are disordered. The segment covering 545–567 (EKEEEGEPEEKSEEEIEIIEGQE) has biased composition (acidic residues). 7 positions are modified to phosphoserine: S556, S572, S575, S577, S587, S590, and S597. Residues 568–579 (EGNKSNKSGSED) show a composition bias toward basic and acidic residues. Basic residues predominate over residues 597-606 (SVRKRRVRKE).

The protein belongs to the calreticulin family. In terms of assembly, interacts with PPIB and PDILT. Interacts with ADAM2.

The protein localises to the endoplasmic reticulum membrane. Functions during spermatogenesis as a chaperone for a range of client proteins that are important for sperm adhesion onto the egg zona pellucida and for subsequent penetration of the zona pellucida. Required for normal sperm migration from the uterus into the oviduct. Required for normal male fertility. Binds calcium ions. The chain is Calmegin (CLGN) from Bos taurus (Bovine).